Consider the following 413-residue polypeptide: Multifunctional CCA protein (413 aa).

ATP is bound by residues glycine 8 and arginine 11. CTP contacts are provided by glycine 8 and arginine 11. Positions 21 and 23 each coordinate Mg(2+). Arginine 91, arginine 137, and arginine 140 together coordinate ATP. 3 residues coordinate CTP: arginine 91, arginine 137, and arginine 140. Residues 228–329 (TGIHTLMVLE…VKLFDKADLW (102 aa)) enclose the HD domain.

Belongs to the tRNA nucleotidyltransferase/poly(A) polymerase family. Bacterial CCA-adding enzyme type 1 subfamily. In terms of assembly, monomer. Can also form homodimers and oligomers. The cofactor is Mg(2+). Ni(2+) serves as cofactor.

It catalyses the reaction a tRNA precursor + 2 CTP + ATP = a tRNA with a 3' CCA end + 3 diphosphate. It carries out the reaction a tRNA with a 3' CCA end + 2 CTP + ATP = a tRNA with a 3' CCACCA end + 3 diphosphate. Its function is as follows. Catalyzes the addition and repair of the essential 3'-terminal CCA sequence in tRNAs without using a nucleic acid template. Adds these three nucleotides in the order of C, C, and A to the tRNA nucleotide-73, using CTP and ATP as substrates and producing inorganic pyrophosphate. tRNA 3'-terminal CCA addition is required both for tRNA processing and repair. Also involved in tRNA surveillance by mediating tandem CCA addition to generate a CCACCA at the 3' terminus of unstable tRNAs. While stable tRNAs receive only 3'-terminal CCA, unstable tRNAs are marked with CCACCA and rapidly degraded. In Shewanella loihica (strain ATCC BAA-1088 / PV-4), this protein is Multifunctional CCA protein.